Reading from the N-terminus, the 242-residue chain is Venom nerve growth factor 2 (242 aa).

Residues 1–18 form the signal peptide; that stretch reads MSMLCYTLIIAFLIGIWA. The propeptide occupies 19–125; sequence APKSEDNVPL…ALNRNIRSKR (107 aa). The interval 46 to 69 is disordered; it reads KALKTSRNTDQRHPAPKKAEDQEL. A compositionally biased stretch (basic and acidic residues) spans 52 to 66; it reads RNTDQRHPAPKKAED. Intrachain disulfides connect Cys139-Cys203, Cys181-Cys231, and Cys191-Cys233. N-linked (GlcNAc...) asparagine glycosylation is present at Asn147.

The protein belongs to the NGF-beta family. As to quaternary structure, homodimer; non-covalently linked. In terms of tissue distribution, expressed by the venom gland.

It is found in the secreted. In terms of biological role, nerve growth factor is important for the development and maintenance of the sympathetic and sensory nervous systems. It stimulates division and differentiation of sympathetic and embryonic sensory neurons as well as basal forebrain cholinergic neurons in the brain. Its relevance in the snake venom is not clear. However, it has been shown to inhibit metalloproteinase-dependent proteolysis of platelet glycoprotein Ib alpha, suggesting a metalloproteinase inhibition to prevent metalloprotease autodigestion and/or protection against prey proteases. Binds a lipid between the two protein chains in the homodimer. The lipid-bound form promotes histamine relase from mouse mast cells, contrary to the lipid-free form. The sequence is that of Venom nerve growth factor 2 from Demansia vestigiata (Lesser black whip snake).